We begin with the raw amino-acid sequence, 195 residues long: uncharacterized protein (195 aa).

The disordered stretch occupies residues 86 to 158 (LPSEGGWTSG…PAPVSGEPPE (73 aa)).

This is an uncharacterized protein from Homo sapiens (Human).